We begin with the raw amino-acid sequence, 482 residues long: 23S rRNA (uracil(1939)-C(5))-methyltransferase RlmD (482 aa).

The segment at Met1–Ala33 is disordered. The segment covering Lys15–Ser28 has biased composition (low complexity). The region spanning Thr51–Ser108 is the TRAM domain. The [4Fe-4S] cluster site is built by Cys121, Cys127, Cys130, and Cys208. S-adenosyl-L-methionine is bound by residues Gln313, Phe342, Asn347, Glu363, Asp390, and Asp411. Cys437 acts as the Nucleophile in catalysis.

Belongs to the class I-like SAM-binding methyltransferase superfamily. RNA M5U methyltransferase family. RlmD subfamily.

The enzyme catalyses uridine(1939) in 23S rRNA + S-adenosyl-L-methionine = 5-methyluridine(1939) in 23S rRNA + S-adenosyl-L-homocysteine + H(+). Catalyzes the formation of 5-methyl-uridine at position 1939 (m5U1939) in 23S rRNA. The protein is 23S rRNA (uracil(1939)-C(5))-methyltransferase RlmD of Alteromonas mediterranea (strain DSM 17117 / CIP 110805 / LMG 28347 / Deep ecotype).